The sequence spans 314 residues: Transcriptional activator RhrA (314 aa).

Residues A210–L310 form the HTH araC/xylS-type domain. 2 DNA-binding regions (H-T-H motif) span residues T228–G249 and I277–Y300.

In terms of biological role, transcriptional activator of the rhizobactin regulon. This chain is Transcriptional activator RhrA (rhrA), found in Rhizobium meliloti (strain 1021) (Ensifer meliloti).